The primary structure comprises 1235 residues: ATP-dependent helicase/nuclease subunit A (1235 aa).

One can recognise a UvrD-like helicase ATP-binding domain in the interval 12 to 482 (SLWTDDQWKA…IDLSQNFRSR (471 aa)). Position 33–40 (33–40 (AAAGSGKT)) interacts with ATP. Positions 509-800 (AAELTLGAKS…RMMTIHASKG (292 aa)) constitute a UvrD-like helicase C-terminal domain.

The protein belongs to the helicase family. AddA subfamily. Heterodimer of AddA and AddB/RexB. The cofactor is Mg(2+).

The catalysed reaction is Couples ATP hydrolysis with the unwinding of duplex DNA by translocating in the 3'-5' direction.. It carries out the reaction ATP + H2O = ADP + phosphate + H(+). Its function is as follows. The heterodimer acts as both an ATP-dependent DNA helicase and an ATP-dependent, dual-direction single-stranded exonuclease. Recognizes the chi site generating a DNA molecule suitable for the initiation of homologous recombination. The AddA nuclease domain is required for chi fragment generation; this subunit has the helicase and 3' -&gt; 5' nuclease activities. This is ATP-dependent helicase/nuclease subunit A from Listeria monocytogenes serotype 4a (strain HCC23).